The primary structure comprises 82 residues: DNA-directed RNA polymerase subunit omega (82 aa).

The protein belongs to the RNA polymerase subunit omega family. As to quaternary structure, in cyanobacteria the RNAP catalytic core is composed of 2 alpha, 1 beta, 1 beta', 1 gamma and 1 omega subunit. When a sigma factor is associated with the core the holoenzyme is formed, which can initiate transcription.

The catalysed reaction is RNA(n) + a ribonucleoside 5'-triphosphate = RNA(n+1) + diphosphate. In terms of biological role, promotes RNA polymerase assembly. Latches the N- and C-terminal regions of the beta' subunit thereby facilitating its interaction with the beta and alpha subunits. The sequence is that of DNA-directed RNA polymerase subunit omega from Trichodesmium erythraeum (strain IMS101).